Consider the following 208-residue polypeptide: Uracil phosphoribosyltransferase (208 aa).

Residues Arg78, Arg103, and 130 to 138 (DPMLATGGT) each bind 5-phospho-alpha-D-ribose 1-diphosphate. Uracil contacts are provided by residues Ile193 and 198-200 (GDA). Asp199 serves as a coordination point for 5-phospho-alpha-D-ribose 1-diphosphate.

It belongs to the UPRTase family. It depends on Mg(2+) as a cofactor.

The enzyme catalyses UMP + diphosphate = 5-phospho-alpha-D-ribose 1-diphosphate + uracil. The protein operates within pyrimidine metabolism; UMP biosynthesis via salvage pathway; UMP from uracil: step 1/1. Allosterically activated by GTP. Its function is as follows. Catalyzes the conversion of uracil and 5-phospho-alpha-D-ribose 1-diphosphate (PRPP) to UMP and diphosphate. This is Uracil phosphoribosyltransferase from Maridesulfovibrio salexigens (strain ATCC 14822 / DSM 2638 / NCIMB 8403 / VKM B-1763) (Desulfovibrio salexigens).